We begin with the raw amino-acid sequence, 200 residues long: Pyridoxal 5'-phosphate synthase subunit PdxT (200 aa).

52-54 serves as a coordination point for L-glutamine; it reads GES. Residue C84 is the Nucleophile of the active site. Residues R116 and 145 to 146 each bind L-glutamine; that span reads IR. Catalysis depends on charge relay system residues H181 and E183.

The protein belongs to the glutaminase PdxT/SNO family. As to quaternary structure, in the presence of PdxS, forms a dodecamer of heterodimers. Only shows activity in the heterodimer.

The enzyme catalyses aldehydo-D-ribose 5-phosphate + D-glyceraldehyde 3-phosphate + L-glutamine = pyridoxal 5'-phosphate + L-glutamate + phosphate + 3 H2O + H(+). It carries out the reaction L-glutamine + H2O = L-glutamate + NH4(+). It participates in cofactor biosynthesis; pyridoxal 5'-phosphate biosynthesis. Functionally, catalyzes the hydrolysis of glutamine to glutamate and ammonia as part of the biosynthesis of pyridoxal 5'-phosphate. The resulting ammonia molecule is channeled to the active site of PdxS. The protein is Pyridoxal 5'-phosphate synthase subunit PdxT of Saccharolobus islandicus (strain L.S.2.15 / Lassen #1) (Sulfolobus islandicus).